The primary structure comprises 318 residues: uncharacterized protein (318 aa).

2 helical membrane-spanning segments follow: residues 230–250 (VWTYLGSIISLLSLAYASFLI) and 264–284 (ASLMVAILFLGGVQLISLGVI).

This sequence belongs to the glycosyltransferase 2 family. GtrB subfamily.

It is found in the cell membrane. This is an uncharacterized protein from Synechocystis sp. (strain ATCC 27184 / PCC 6803 / Kazusa).